A 249-amino-acid chain; its full sequence is tRNA (guanine-N(1)-)-methyltransferase (249 aa).

S-adenosyl-L-methionine-binding positions include glycine 113 and 133 to 138 (IGDYVL).

This sequence belongs to the RNA methyltransferase TrmD family. Homodimer.

Its subcellular location is the cytoplasm. It carries out the reaction guanosine(37) in tRNA + S-adenosyl-L-methionine = N(1)-methylguanosine(37) in tRNA + S-adenosyl-L-homocysteine + H(+). In terms of biological role, specifically methylates guanosine-37 in various tRNAs. This chain is tRNA (guanine-N(1)-)-methyltransferase, found in Aeromonas salmonicida (strain A449).